A 128-amino-acid chain; its full sequence is Aspartate 1-decarboxylase (128 aa).

Residue Ser25 is the Schiff-base intermediate with substrate; via pyruvic acid of the active site. The residue at position 25 (Ser25) is a Pyruvic acid (Ser). Residue Thr57 participates in substrate binding. The active-site Proton donor is Tyr58. Residue 73-75 (GSA) participates in substrate binding.

It belongs to the PanD family. In terms of assembly, heterooctamer of four alpha and four beta subunits. Pyruvate serves as cofactor. In terms of processing, is synthesized initially as an inactive proenzyme, which is activated by self-cleavage at a specific serine bond to produce a beta-subunit with a hydroxyl group at its C-terminus and an alpha-subunit with a pyruvoyl group at its N-terminus.

Its subcellular location is the cytoplasm. The enzyme catalyses L-aspartate + H(+) = beta-alanine + CO2. It functions in the pathway cofactor biosynthesis; (R)-pantothenate biosynthesis; beta-alanine from L-aspartate: step 1/1. Its function is as follows. Catalyzes the pyruvoyl-dependent decarboxylation of aspartate to produce beta-alanine. The sequence is that of Aspartate 1-decarboxylase from Burkholderia vietnamiensis (strain G4 / LMG 22486) (Burkholderia cepacia (strain R1808)).